The chain runs to 741 residues: Protein O-mannosyl-transferase TMTC4 (741 aa).

The Cytoplasmic portion of the chain corresponds to 1 to 14 (MAVLDTDLDHILPS). Residues 15 to 35 (SVLPPFWAKLVVGSVAIVCFA) form a helical membrane-spanning segment. The Extracellular segment spans residues 36-111 (RSYDGDFVFD…FHPVGFHVVN (76 aa)). N-linked (GlcNAc...) asparagine glycosylation occurs at Asn-78. A helical transmembrane segment spans residues 112 to 132 (ILLHSGISVLMVDVFSVLFGG). The Cytoplasmic portion of the chain corresponds to 133–141 (LQYTSKGRR). A helical transmembrane segment spans residues 142-162 (LHLAPRASLLAALLFAVHPVH). The Extracellular portion of the chain corresponds to 163-165 (TEC). The chain crosses the membrane as a helical span at residues 166 to 186 (VAGVVGRADLLCALFFLLSFL). Residues 187-198 (GYCKAFRESNKE) are Cytoplasmic-facing. The helical transmembrane segment at 199–219 (GAHSSTFWVLLSIFLGAVAML) threads the bilayer. Topologically, residues 220–224 (CKEQG) are extracellular. A helical membrane pass occupies residues 225–245 (ITVLGLNAVFDILVIGKFNVL). Over 246–268 (EIVQKVLHKDKSLENLGMLRNGG) the chain is Cytoplasmic. The chain crosses the membrane as a helical span at residues 269 to 288 (LLFRMTLLTSGGAGMLYVRW). Over 289 to 354 (RIMGTGPPAF…PLIKSISDWR (66 aa)) the chain is Extracellular. A helical transmembrane segment spans residues 355 to 375 (VIALAALWFCLIGLICQALCS). The Cytoplasmic portion of the chain corresponds to 376-382 (EDGHKRR). Residues 383-403 (ILTLGLGFLVIPFLPASNLFF) traverse the membrane as a helical segment. The Extracellular portion of the chain corresponds to 404–412 (RVGFVVAER). Residues 413 to 433 (VLYLPSVGYCVLLTFGFGALS) traverse the membrane as a helical segment. Residues 434-440 (KHTKKKK) lie on the Cytoplasmic side of the membrane. Residues 441-461 (LIAAVVLGILFINTLRCVLRS) traverse the membrane as a helical segment. The Extracellular segment spans residues 462–741 (GEWRSEEQLF…KLELMQKKAV (280 aa)). TPR repeat units follow at residues 482–515 (AKVH…NPKY), 516–549 (VHAM…QPDF), 550–583 (AAAW…RRKY), 584–617 (PDCY…KPEH), 618–651 (SLAW…IPND), 652–685 (HSLM…NPNA), and 686–719 (ASYH…DPTA). Asn-497 is a glycosylation site (N-linked (GlcNAc...) asparagine). Residue Asn-609 is glycosylated (N-linked (GlcNAc...) asparagine).

The protein belongs to the TMTC family.

It localises to the membrane. It is found in the endoplasmic reticulum. The catalysed reaction is a di-trans,poly-cis-dolichyl beta-D-mannosyl phosphate + L-seryl-[protein] = 3-O-(alpha-D-mannosyl)-L-seryl-[protein] + a di-trans,poly-cis-dolichyl phosphate + H(+). The enzyme catalyses a di-trans,poly-cis-dolichyl beta-D-mannosyl phosphate + L-threonyl-[protein] = 3-O-(alpha-D-mannosyl)-L-threonyl-[protein] + a di-trans,poly-cis-dolichyl phosphate + H(+). It functions in the pathway protein modification; protein glycosylation. Transfers mannosyl residues to the hydroxyl group of serine or threonine residues. The 4 members of the TMTC family are O-mannosyl-transferases dedicated primarily to the cadherin superfamily, each member seems to have a distinct role in decorating the cadherin domains with O-linked mannose glycans at specific regions. Also acts as O-mannosyl-transferase on other proteins such as PDIA3. This chain is Protein O-mannosyl-transferase TMTC4, found in Homo sapiens (Human).